A 77-amino-acid chain; its full sequence is Acyl carrier protein (77 aa).

Residues 2–77 (SDVADRVKKI…DAVKFISEAS (76 aa)) enclose the Carrier domain. Ser37 carries the O-(pantetheine 4'-phosphoryl)serine modification.

It belongs to the acyl carrier protein (ACP) family. Post-translationally, 4'-phosphopantetheine is transferred from CoA to a specific serine of apo-ACP by AcpS. This modification is essential for activity because fatty acids are bound in thioester linkage to the sulfhydryl of the prosthetic group.

It is found in the cytoplasm. Its pathway is lipid metabolism; fatty acid biosynthesis. Its function is as follows. Carrier of the growing fatty acid chain in fatty acid biosynthesis. This is Acyl carrier protein from Ruegeria pomeroyi (strain ATCC 700808 / DSM 15171 / DSS-3) (Silicibacter pomeroyi).